The sequence spans 211 residues: Stromal cell-derived factor 2 (211 aa).

The first 18 residues, 1–18, serve as a signal peptide directing secretion; the sequence is MAVLSLLLLGGLWSAVGA. MIR domains are found at residues 21–75, 83–138, and 139–193; these read MAVV…IRGK, GTPI…VLCN, and GPYW…AMEG.

In terms of tissue distribution, ubiquitously expressed with highest expression in liver and kidney.

The protein localises to the secreted. The sequence is that of Stromal cell-derived factor 2 (Sdf2) from Mus musculus (Mouse).